The following is a 257-amino-acid chain: Acetylglutamate kinase (257 aa).

Substrate contacts are provided by residues 43-44, R65, and N157; that span reads GG. Residues 180–185 and 208–210 contribute to the ATP site; these read DVSGIL and IIT.

This sequence belongs to the acetylglutamate kinase family. ArgB subfamily. Homodimer.

It is found in the cytoplasm. It catalyses the reaction N-acetyl-L-glutamate + ATP = N-acetyl-L-glutamyl 5-phosphate + ADP. Its pathway is amino-acid biosynthesis; L-arginine biosynthesis; N(2)-acetyl-L-ornithine from L-glutamate: step 2/4. In terms of biological role, catalyzes the ATP-dependent phosphorylation of N-acetyl-L-glutamate. This chain is Acetylglutamate kinase, found in Pectobacterium carotovorum subsp. carotovorum (strain PC1).